The chain runs to 227 residues: Cytochrome c oxidase subunit 2 (227 aa).

The Mitochondrial intermembrane portion of the chain corresponds to 1–14 (MAYPFQLGLQDATS). The helical transmembrane segment at 15-45 (PIMEELMNFHDHTLMIVFLISSLVLYIISLM) threads the bilayer. At 46–59 (LTTKLTHTSTMDAQ) the chain is on the mitochondrial matrix side. The chain crosses the membrane as a helical span at residues 60–87 (EVETIWTILPAVILILIALPSLRILYMM). Over 88–227 (DEINNPVLTV…NFENWSTSMI (140 aa)) the chain is Mitochondrial intermembrane. Positions 161, 196, 198, 200, 204, and 207 each coordinate Cu cation. A Mg(2+)-binding site is contributed by Glu198.

It belongs to the cytochrome c oxidase subunit 2 family. In terms of assembly, component of the cytochrome c oxidase (complex IV, CIV), a multisubunit enzyme composed of 14 subunits. The complex is composed of a catalytic core of 3 subunits MT-CO1, MT-CO2 and MT-CO3, encoded in the mitochondrial DNA, and 11 supernumerary subunits COX4I, COX5A, COX5B, COX6A, COX6B, COX6C, COX7A, COX7B, COX7C, COX8 and NDUFA4, which are encoded in the nuclear genome. The complex exists as a monomer or a dimer and forms supercomplexes (SCs) in the inner mitochondrial membrane with NADH-ubiquinone oxidoreductase (complex I, CI) and ubiquinol-cytochrome c oxidoreductase (cytochrome b-c1 complex, complex III, CIII), resulting in different assemblies (supercomplex SCI(1)III(2)IV(1) and megacomplex MCI(2)III(2)IV(2)). Found in a complex with TMEM177, COA6, COX18, COX20, SCO1 and SCO2. Interacts with TMEM177 in a COX20-dependent manner. Interacts with COX20. Interacts with COX16. Cu cation is required as a cofactor.

The protein resides in the mitochondrion inner membrane. The enzyme catalyses 4 Fe(II)-[cytochrome c] + O2 + 8 H(+)(in) = 4 Fe(III)-[cytochrome c] + 2 H2O + 4 H(+)(out). Its function is as follows. Component of the cytochrome c oxidase, the last enzyme in the mitochondrial electron transport chain which drives oxidative phosphorylation. The respiratory chain contains 3 multisubunit complexes succinate dehydrogenase (complex II, CII), ubiquinol-cytochrome c oxidoreductase (cytochrome b-c1 complex, complex III, CIII) and cytochrome c oxidase (complex IV, CIV), that cooperate to transfer electrons derived from NADH and succinate to molecular oxygen, creating an electrochemical gradient over the inner membrane that drives transmembrane transport and the ATP synthase. Cytochrome c oxidase is the component of the respiratory chain that catalyzes the reduction of oxygen to water. Electrons originating from reduced cytochrome c in the intermembrane space (IMS) are transferred via the dinuclear copper A center (CU(A)) of subunit 2 and heme A of subunit 1 to the active site in subunit 1, a binuclear center (BNC) formed by heme A3 and copper B (CU(B)). The BNC reduces molecular oxygen to 2 water molecules using 4 electrons from cytochrome c in the IMS and 4 protons from the mitochondrial matrix. In Apodemus mystacinus (Broad-toothed field mouse), this protein is Cytochrome c oxidase subunit 2 (MT-CO2).